The following is a 72-amino-acid chain: Large ribosomal subunit protein uL29 (72 aa).

Belongs to the universal ribosomal protein uL29 family.

The sequence is that of Large ribosomal subunit protein uL29 from Prochlorococcus marinus subsp. pastoris (strain CCMP1986 / NIES-2087 / MED4).